A 65-amino-acid polypeptide reads, in one-letter code: uncharacterized protein (65 aa).

This is an uncharacterized protein from Acheta domesticus (House cricket).